A 752-amino-acid polypeptide reads, in one-letter code: Peptidyl-prolyl cis-trans isomerase G (752 aa).

The PPIase cyclophilin-type domain maps to 11 to 176 (FFDIAINNQP…AEVRILSCGE (166 aa)). Basic residues predominate over residues 182 to 193 (KVKKEEKKRHKS). A disordered region spans residues 182–752 (KVKKEEKKRH…SPGTDEDKSG (571 aa)). Residues 194–214 (SSSSSSSDSDSSSDSQSSSES) show a composition bias toward low complexity. Basic residues predominate over residues 226–251 (RKRKKKHRKNSRKHKKEKKKRKKSKK). Phosphoserine occurs at positions 252, 254, 255, 257, and 288. Positions 290 to 308 (PKADDKERKNREREREREC) are enriched in basic and acidic residues. Residue S313 is modified to Phosphoserine. A compositionally biased stretch (basic residues) spans 327–345 (SGRKIKGRGPRRYRTPSRS). Basic and acidic residues-rich tracts occupy residues 346-366 (RSRD…EMQR) and 377-447 (RWIK…DKYN). S354 carries the phosphoserine modification. T356 is modified (phosphothreonine). Position 384 is a phosphoserine (S384). Residue K390 forms a Glycyl lysine isopeptide (Lys-Gly) (interchain with G-Cter in SUMO2) linkage. Phosphoserine is present on residues S395, S411, and S413. Basic residues predominate over residues 448–461 (KNKVKKRGKSKSRS). Basic and acidic residues-rich tracts occupy residues 462–552 (KSKE…DLTK) and 577–598 (RSHD…QEYR). Residues 599-625 (RRGRSRSRDRRTPGRSRSKDRRRRRRD) show a composition bias toward basic residues. The span at 626-684 (SRSSEREESQSRNKDKYRSQESKSSHRKENSEGEKRTYSKSRDHNSSSNNREKKADREQ) shows a compositional bias: basic and acidic residues. A phosphoserine mark is found at S685 and S688. Over residues 685–705 (SPVSKTKQSSQDNEVKSSTLK) the composition is skewed to polar residues. Residue K691 forms a Glycyl lysine isopeptide (Lys-Gly) (interchain with G-Cter in SUMO2) linkage. S694, S742, and S743 each carry phosphoserine. The segment covering 706 to 752 (NQEDEKTRSPVEKENQKSKGQENDHVHDKNKKCDHESSPGTDEDKSG) has biased composition (basic and acidic residues). Residue T746 is modified to Phosphothreonine. At S751 the chain carries Phosphoserine.

In terms of assembly, interacts with CLK1, PNN and with the phosphorylated C-terminal domain of RNA polymerase II.

Its subcellular location is the nucleus matrix. It is found in the nucleus speckle. It catalyses the reaction [protein]-peptidylproline (omega=180) = [protein]-peptidylproline (omega=0). With respect to regulation, inhibited by cyclosporin A (CsA). In terms of biological role, PPIase that catalyzes the cis-trans isomerization of proline imidic peptide bonds in oligopeptides and may therefore assist protein folding. May be implicated in the folding, transport, and assembly of proteins. May play an important role in the regulation of pre-mRNA splicing. The chain is Peptidyl-prolyl cis-trans isomerase G (Ppig) from Mus musculus (Mouse).